Reading from the N-terminus, the 144-residue chain is Flagellar assembly factor FliW (144 aa).

This sequence belongs to the FliW family. Monomer. One copy interacts with the each alpha-helical wing of the CsrA homodimer, yielding a FliW-CsrA(2)-FliW complex. Comparison with a CsrA-mRNA structure (2JPP) suggests CsrA cannot bind both mRNA and FliW at the same time. Interacts with flagellin.

The protein localises to the cytoplasm. Acts as an anti-CsrA protein, binds CsrA and prevents it from repressing translation of its target genes, one of which is flagellin. Binds to flagellin and participates in the assembly of the flagellum. Its function is as follows. Allosterically inhibits CsrA binding to mRNA in a non-competitive fashion by preventing CsrA binding to the 5'-UTR. This chain is Flagellar assembly factor FliW, found in Geobacillus thermodenitrificans (strain NG80-2).